The chain runs to 611 residues: Phosphomethylpyrimidine synthase (611 aa).

Substrate-binding positions include N218, M247, Y276, H312, 332 to 334 (SRG), 373 to 376 (DGLR), and E412. A Zn(2+)-binding site is contributed by H416. Y439 lines the substrate pocket. H480 lines the Zn(2+) pocket. [4Fe-4S] cluster is bound by residues C560, C563, and C568.

Belongs to the ThiC family. In terms of assembly, homodimer. Requires [4Fe-4S] cluster as cofactor.

The catalysed reaction is 5-amino-1-(5-phospho-beta-D-ribosyl)imidazole + S-adenosyl-L-methionine = 4-amino-2-methyl-5-(phosphooxymethyl)pyrimidine + CO + 5'-deoxyadenosine + formate + L-methionine + 3 H(+). It participates in cofactor biosynthesis; thiamine diphosphate biosynthesis. In terms of biological role, catalyzes the synthesis of the hydroxymethylpyrimidine phosphate (HMP-P) moiety of thiamine from aminoimidazole ribotide (AIR) in a radical S-adenosyl-L-methionine (SAM)-dependent reaction. The chain is Phosphomethylpyrimidine synthase from Caulobacter sp. (strain K31).